The following is an 865-amino-acid chain: MERGSPGAGAARLPRDQDSVEAWLDDHRDFTFSYFVKKATREMVNAWFAERVHTIPVCKEGIRGHAESCSCSSQQSSRADSSAPGTPTRKISASEFDRPLRPIVVKDSEGTVSFLADSEKKEQMPLTPPRFDNDEGDQCSRLLELVKDISSHLDVTALCHKIFLHIHGLISADRYSLFLVCEDSSNDKFLISRLFDVAEGSTLEEASNNCIRLEWNKGIVGHVAALGEPLNIKDAYEDPRFNAEVDQITGYKTQSILCMPIKNHREEVVGVAQAINKKSGNGGTFTEKDEKDFAAYLAFCGIVLHNAQLYETSLLENKRNQVLLDLASLIFEEQQSLEVILKKIAATIISFMQVQKCTIFIVDEDCSDSFSSVFHMECEELEKLPDTLTRERDANRINYMYAQYVKNTMEPLNIPDVSKDKRFPWTNENTGNVNQQCIRSLLCTPIKNGKKNKVIGVCQLVNKMEENTGKVKPFNRNDEQFLEAFVIFCGLGIQNTQMYEAVERAMAKQMVTLEVLSYHASAAEEETKELQSLAAAVVPSAQTLKITDFSFSDFELSDLETALCTIRMFTDLNLVQNFQMKHEVLCRWILSVKKNYRKNVAYHNWRHAFNTAQCMFAALKAGKIQNKLTDLEILALLIAALSHDLDHRGVNNSYIQRSEHPLAQLYCHSIMEHHHFDQCLMILNSPGNQILSGLSIEEYKTTLKIIKQAILATDLALYIKRRGEFFELIRKNQFNLEDPHQKELFLAMLMTACDLSAITKPWPIQQRIAELVATEFFDQGDRERKELNIEPADLMNREKKNKIPSMQVGFIDAICLQLYEALTHVSEDCFPLLDGCRKNRQKWQALAEQQEKTLINGESSQAKRN.

Positions C69–A83 are enriched in low complexity. Residues C69–S92 are disordered. Residue S92 is modified to Phosphoserine. 2 GAF domains span residues D154–L304 and S336–I493. The PDEase domain occupies E526–Q850. The active-site Proton donor is the H603. Residues H607, H643, D644, and D754 each coordinate Zn(2+). D644 provides a ligand contact to Mg(2+). Residue Q807 participates in 3',5'-cyclic GMP binding.

The protein belongs to the cyclic nucleotide phosphodiesterase family. The cofactor is Zn(2+). Requires Mg(2+) as cofactor. Phosphorylation is regulated by binding of cGMP to the two allosteric sites. Phosphorylation by PRKG1 leads to its activation. In terms of tissue distribution, isoform PDE5A1 and isoform PDE5A2 are highly expressed in the cerebellum, hippocampus, retina, lung, heart, spleen, and thoracic artery. Isoform PDE5A1, but not isoform PDE5A2, is also abundantly expressed in the pylorus.

It is found in the cytoplasm. Its subcellular location is the cytosol. The catalysed reaction is 3',5'-cyclic GMP + H2O = GMP + H(+). The protein operates within purine metabolism; 3',5'-cyclic GMP degradation; GMP from 3',5'-cyclic GMP: step 1/1. Inhibited by zaprinast. Its function is as follows. Plays a role in signal transduction by regulating the intracellular concentration of cyclic nucleotides. This phosphodiesterase catalyzes the specific hydrolysis of cGMP to 5'-GMP. Specifically regulates nitric-oxide-generated cGMP. The chain is cGMP-specific 3',5'-cyclic phosphodiesterase (PDE5A) from Canis lupus familiaris (Dog).